The following is a 541-amino-acid chain: Eukaryotic translation initiation factor 3 subunit D-1 (541 aa).

The interval 98–136 (VQKPPHQRGRFRNMRGRGGRGRNPRGGLNNHHHHGMTTL) is disordered. Residues 100–120 (KPPHQRGRFRNMRGRGGRGRN) show a composition bias toward basic residues.

The protein belongs to the eIF-3 subunit D family. In terms of assembly, component of the eukaryotic translation initiation factor 3 (eIF-3) complex. The eIF-3 complex interacts with pix.

It localises to the cytoplasm. In terms of biological role, mRNA cap-binding component of the eukaryotic translation initiation factor 3 (eIF-3) complex, which is involved in protein synthesis of a specialized repertoire of mRNAs and, together with other initiation factors, stimulates binding of mRNA and methionyl-tRNAi to the 40S ribosome. The eIF-3 complex specifically targets and initiates translation of a subset of mRNAs involved in cell proliferation. In the eIF-3 complex, eif3d specifically recognizes and binds the 7-methylguanosine cap of a subset of mRNAs. The sequence is that of Eukaryotic translation initiation factor 3 subunit D-1 from Drosophila persimilis (Fruit fly).